The primary structure comprises 417 residues: Tryptophan synthase beta chain (417 aa).

Lysine 110 carries the post-translational modification N6-(pyridoxal phosphate)lysine.

The protein belongs to the TrpB family. In terms of assembly, tetramer of two alpha and two beta chains. Pyridoxal 5'-phosphate is required as a cofactor.

The enzyme catalyses (1S,2R)-1-C-(indol-3-yl)glycerol 3-phosphate + L-serine = D-glyceraldehyde 3-phosphate + L-tryptophan + H2O. It participates in amino-acid biosynthesis; L-tryptophan biosynthesis; L-tryptophan from chorismate: step 5/5. In terms of biological role, the beta subunit is responsible for the synthesis of L-tryptophan from indole and L-serine. This is Tryptophan synthase beta chain from Prochlorococcus marinus (strain NATL1A).